The following is a 460-amino-acid chain: Glutamyl-tRNA reductase (460 aa).

Substrate is bound by residues 48-51 (TCNR), Ser100, 105-107 (EDQ), and Gln111. Cys49 functions as the Nucleophile in the catalytic mechanism. NADP(+) is bound at residue 180–185 (GAGEIG).

This sequence belongs to the glutamyl-tRNA reductase family. In terms of assembly, homodimer.

The catalysed reaction is (S)-4-amino-5-oxopentanoate + tRNA(Glu) + NADP(+) = L-glutamyl-tRNA(Glu) + NADPH + H(+). It participates in porphyrin-containing compound metabolism; protoporphyrin-IX biosynthesis; 5-aminolevulinate from L-glutamyl-tRNA(Glu): step 1/2. Functionally, catalyzes the NADPH-dependent reduction of glutamyl-tRNA(Glu) to glutamate 1-semialdehyde (GSA). The protein is Glutamyl-tRNA reductase of Methanosarcina acetivorans (strain ATCC 35395 / DSM 2834 / JCM 12185 / C2A).